A 155-amino-acid polypeptide reads, in one-letter code: Small ribosomal subunit protein uS7 (155 aa).

The protein belongs to the universal ribosomal protein uS7 family. As to quaternary structure, part of the 30S ribosomal subunit. Contacts proteins S9 and S11.

Functionally, one of the primary rRNA binding proteins, it binds directly to 16S rRNA where it nucleates assembly of the head domain of the 30S subunit. Is located at the subunit interface close to the decoding center, probably blocks exit of the E-site tRNA. The sequence is that of Small ribosomal subunit protein uS7 from Mesoplasma florum (strain ATCC 33453 / NBRC 100688 / NCTC 11704 / L1) (Acholeplasma florum).